Consider the following 257-residue polypeptide: UPF0246 protein Ping_3037 (257 aa).

The protein belongs to the UPF0246 family.

The protein is UPF0246 protein Ping_3037 of Psychromonas ingrahamii (strain DSM 17664 / CCUG 51855 / 37).